Here is a 368-residue protein sequence, read N- to C-terminus: Quinolinate synthase (368 aa).

Positions 46 and 63 each coordinate iminosuccinate. Cys-110 is a binding site for [4Fe-4S] cluster. Residues Tyr-141–Asn-143 and Ser-162 contribute to the iminosuccinate site. Residue Cys-230 participates in [4Fe-4S] cluster binding. Iminosuccinate contacts are provided by residues His-256–Glu-258 and Thr-273. [4Fe-4S] cluster is bound at residue Cys-320.

The protein belongs to the quinolinate synthase family. Type 3 subfamily. It depends on [4Fe-4S] cluster as a cofactor.

It is found in the cytoplasm. The enzyme catalyses iminosuccinate + dihydroxyacetone phosphate = quinolinate + phosphate + 2 H2O + H(+). The protein operates within cofactor biosynthesis; NAD(+) biosynthesis; quinolinate from iminoaspartate: step 1/1. Catalyzes the condensation of iminoaspartate with dihydroxyacetone phosphate to form quinolinate. In Bacillus cereus (strain B4264), this protein is Quinolinate synthase.